The following is a 491-amino-acid chain: tRNA-2-methylthio-N(6)-dimethylallyladenosine synthase (491 aa).

Residues 3-119 (RSYQIRTYGC…LPTLLERARH (117 aa)) enclose the MTTase N-terminal domain. Positions 12, 48, 82, 156, 160, and 163 each coordinate [4Fe-4S] cluster. A Radical SAM core domain is found at 142–372 (RESAYSGWVS…IELQNQISWD (231 aa)). Residues 375 to 446 (KELVGRSVEL…PHHLVADSEI (72 aa)) enclose the TRAM domain.

The protein belongs to the methylthiotransferase family. MiaB subfamily. In terms of assembly, monomer. [4Fe-4S] cluster serves as cofactor.

The protein resides in the cytoplasm. It catalyses the reaction N(6)-dimethylallyladenosine(37) in tRNA + (sulfur carrier)-SH + AH2 + 2 S-adenosyl-L-methionine = 2-methylsulfanyl-N(6)-dimethylallyladenosine(37) in tRNA + (sulfur carrier)-H + 5'-deoxyadenosine + L-methionine + A + S-adenosyl-L-homocysteine + 2 H(+). Catalyzes the methylthiolation of N6-(dimethylallyl)adenosine (i(6)A), leading to the formation of 2-methylthio-N6-(dimethylallyl)adenosine (ms(2)i(6)A) at position 37 in tRNAs that read codons beginning with uridine. This Saccharopolyspora erythraea (strain ATCC 11635 / DSM 40517 / JCM 4748 / NBRC 13426 / NCIMB 8594 / NRRL 2338) protein is tRNA-2-methylthio-N(6)-dimethylallyladenosine synthase.